A 322-amino-acid polypeptide reads, in one-letter code: Deoxyhypusine hydroxylase (322 aa).

Fe cation-binding residues include His78, Glu79, His111, and Glu112. HEAT-like PBS-type repeat units follow at residues 109–135, 203–229, 234–260, and 267–293; these read VRHEAAEALGALGDKDSLEDLEKCLKN, LRYRAMFRLRDIGTDEAVLALASGFND, FKHEIAYVFGQMGSTAAVPSLTEVLGR, and VRHEAAEALGAIASEDALPILKQYLND. Residues His236, Glu237, His269, and Glu270 each coordinate Fe cation.

The protein belongs to the deoxyhypusine hydroxylase family. The cofactor is Fe(2+).

It localises to the cytoplasm. The protein localises to the nucleus. It carries out the reaction [eIF5A protein]-deoxyhypusine + AH2 + O2 = [eIF5A protein]-hypusine + A + H2O. Its pathway is protein modification; eIF5A hypusination. In terms of biological role, catalyzes the hydroxylation of the N(6)-(4-aminobutyl)-L-lysine intermediate to form hypusine, an essential post-translational modification only found in mature eIF-5A factor. This chain is Deoxyhypusine hydroxylase, found in Candida glabrata (strain ATCC 2001 / BCRC 20586 / JCM 3761 / NBRC 0622 / NRRL Y-65 / CBS 138) (Yeast).